Consider the following 283-residue polypeptide: MTDITTWIDEYHKGSRFGLNGKILFKKTSKYQEIIVIENEYYGKALMLDGCWMTSLKDEKYYHECLVHPALSSIDEKSNVLIIGGGDGGTVRECVKYSKISKIDLVEIDEEVIKISKKFLKEIAGEAWNDKRLEIHIDDGVKWVEKTKDNFYDVIFIDCSDPSEFSNLLFSHSFYKECERILAPSGILATQSESPESFKNIHINILKSLKNIFKVSETMYSFVPIYPSGIWSWTFASSEDLSLSKQNYDEVVKIEKGCEIWNLNFQNAAFKMMPNKIVKELDS.

Residues 5–238 (TTWIDEYHKG…GIWSWTFASS (234 aa)) enclose the PABS domain. Gln32 lines the S-methyl-5'-thioadenosine pocket. 2 residues coordinate spermidine: His63 and Asp87. S-methyl-5'-thioadenosine-binding positions include Glu107 and 139 to 140 (DG). Asp158 (proton acceptor) is an active-site residue. 158 to 161 (DCSD) serves as a coordination point for spermidine.

Belongs to the spermidine/spermine synthase family. As to quaternary structure, homodimer or homotetramer.

It is found in the cytoplasm. The catalysed reaction is S-adenosyl 3-(methylsulfanyl)propylamine + putrescine = S-methyl-5'-thioadenosine + spermidine + H(+). Its pathway is amine and polyamine biosynthesis; spermidine biosynthesis; spermidine from putrescine: step 1/1. Its function is as follows. Catalyzes the irreversible transfer of a propylamine group from the amino donor S-adenosylmethioninamine (decarboxy-AdoMet) to putrescine (1,4-diaminobutane) to yield spermidine. In Prochlorococcus marinus (strain AS9601), this protein is Polyamine aminopropyltransferase.